Reading from the N-terminus, the 448-residue chain is Adenylosuccinate synthetase 1 (448 aa).

GTP is bound by residues 22 to 28 and 50 to 52; these read GDEGKGK and GHT. D23 (proton acceptor) is an active-site residue. Residues D23 and G50 each coordinate Mg(2+). IMP is bound by residues 23-26, 48-51, T139, R153, Q234, T249, and R321; these read DEGK and NAGH. Catalysis depends on H51, which acts as the Proton donor. 317-323 provides a ligand contact to substrate; it reads SVTGRPR. GTP contacts are provided by residues R323, 349 to 351, and 431 to 433; these read KLD and STG.

Belongs to the adenylosuccinate synthetase family. Homodimer. Mg(2+) serves as cofactor.

Its subcellular location is the cytoplasm. The catalysed reaction is IMP + L-aspartate + GTP = N(6)-(1,2-dicarboxyethyl)-AMP + GDP + phosphate + 2 H(+). It functions in the pathway purine metabolism; AMP biosynthesis via de novo pathway; AMP from IMP: step 1/2. Its function is as follows. Plays an important role in the de novo pathway of purine nucleotide biosynthesis. Catalyzes the first committed step in the biosynthesis of AMP from IMP. In Burkholderia lata (strain ATCC 17760 / DSM 23089 / LMG 22485 / NCIMB 9086 / R18194 / 383), this protein is Adenylosuccinate synthetase 1.